Consider the following 174-residue polypeptide: Co-chaperone protein HscB homolog (174 aa).

The region spanning 2–74 (NYFELFSFTP…ILRAEHMLSL (73 aa)) is the J domain.

It belongs to the HscB family. In terms of assembly, interacts with HscA and stimulates its ATPase activity.

Its function is as follows. Co-chaperone involved in the maturation of iron-sulfur cluster-containing proteins. Seems to help targeting proteins to be folded toward HscA. The chain is Co-chaperone protein HscB homolog from Shewanella woodyi (strain ATCC 51908 / MS32).